The following is a 270-amino-acid chain: Oxidoreductase NAD-binding domain-containing protein 1 (270 aa).

Positions 20–123 constitute an FAD-binding FR-type domain; the sequence is MELFSARVCD…VGGNFYFDPQ (104 aa). 137 to 142 contacts NAD(+); that stretch reads GVGINP.

This Danio rerio (Zebrafish) protein is Oxidoreductase NAD-binding domain-containing protein 1 (oxnad1).